We begin with the raw amino-acid sequence, 340 residues long: Very-long-chain 3-oxoacyl-CoA reductase (340 aa).

Residues 23–43 (LQYTFAALGALYVLRGALSFV) traverse the membrane as a helical segment. The NADP(+) site is built by valine 68, arginine 109, aspartate 123, aspartate 131, asparagine 150, lysine 185, tyrosine 217, lysine 221, valine 250, and threonine 252. Residue tyrosine 217 is the Proton donor of the active site. Lysine 221 (lowers pKa of active site Tyr) is an active-site residue.

The protein belongs to the short-chain dehydrogenases/reductases (SDR) family.

It is found in the endoplasmic reticulum membrane. The enzyme catalyses a very-long-chain (3R)-3-hydroxyacyl-CoA + NADP(+) = a very-long-chain 3-oxoacyl-CoA + NADPH + H(+). Its pathway is lipid metabolism; fatty acid biosynthesis. Functionally, component of the microsomal membrane bound fatty acid elongation system, which produces the 26-carbon very long-chain fatty acids (VLCFA) from palmitate. Catalyzes the reduction of the 3-ketoacyl-CoA intermediate that is formed in each cycle of fatty acid elongation. VLCFAs serve as precursors for ceramide and sphingolipids. This is Very-long-chain 3-oxoacyl-CoA reductase from Podospora anserina (strain S / ATCC MYA-4624 / DSM 980 / FGSC 10383) (Pleurage anserina).